Reading from the N-terminus, the 460-residue chain is Argininosuccinate lyase (460 aa).

It belongs to the lyase 1 family. Argininosuccinate lyase subfamily.

Its subcellular location is the cytoplasm. The catalysed reaction is 2-(N(omega)-L-arginino)succinate = fumarate + L-arginine. It participates in amino-acid biosynthesis; L-arginine biosynthesis; L-arginine from L-ornithine and carbamoyl phosphate: step 3/3. The sequence is that of Argininosuccinate lyase from Leuconostoc mesenteroides subsp. mesenteroides (strain ATCC 8293 / DSM 20343 / BCRC 11652 / CCM 1803 / JCM 6124 / NCDO 523 / NBRC 100496 / NCIMB 8023 / NCTC 12954 / NRRL B-1118 / 37Y).